The following is a 160-amino-acid chain: uncharacterized protein (160 aa).

3 C2H2-type zinc fingers span residues 10–32 (LSCL…LPTH), 41–64 (QTCD…KRYH), and 75–98 (FQCQ…KIEH). Tyr115 is subject to Phosphotyrosine. Position 116 is a phosphoserine (Ser116).

It is found in the nucleus. May be involved in transcriptional regulation. This is an uncharacterized protein from Drosophila melanogaster (Fruit fly).